The primary structure comprises 311 residues: Methionyl-tRNA formyltransferase (311 aa).

110-113 (SLLP) provides a ligand contact to (6S)-5,6,7,8-tetrahydrofolate.

It belongs to the Fmt family.

The catalysed reaction is L-methionyl-tRNA(fMet) + (6R)-10-formyltetrahydrofolate = N-formyl-L-methionyl-tRNA(fMet) + (6S)-5,6,7,8-tetrahydrofolate + H(+). In terms of biological role, attaches a formyl group to the free amino group of methionyl-tRNA(fMet). The formyl group appears to play a dual role in the initiator identity of N-formylmethionyl-tRNA by promoting its recognition by IF2 and preventing the misappropriation of this tRNA by the elongation apparatus. The polypeptide is Methionyl-tRNA formyltransferase (Streptococcus pneumoniae (strain P1031)).